A 588-amino-acid polypeptide reads, in one-letter code: Complement component C8 beta chain (588 aa).

Positions 1-30 (MFRVAIPRSALNLHSCLLHVTLSLVLISKA) are cleaved as a signal peptide. Residues 31–46 (AITTAGNEDSDVREAR) constitute a propeptide that is removed on maturation. In terms of domain architecture, TSP type-1 1 spans 58-113 (DCVISDWSAWSRCDTCQKKRYRYAKLDQPSQFGGEPCHFHDMEDEACDVPDRYTCD). 7 cysteine pairs are disulfide-bonded: C59–C94, C70–C104, C73–C112, C118–C129, C123–C142, C136–C151, and C158–C196. C-linked (Man) tryptophan glycans are attached at residues W64 and W67. The LDL-receptor class A domain maps to 115–152 (IPLCEGFLCTQTGRCIHRTLQCNGEDDCGDMSDEVGCK). Residues L134, N137, E139, D141, D147, and E148 each contribute to the Ca(2+) site. Residues 154-500 (VPKPCRQEAE…EYLAESSSCR (347 aa)) form the MACPF domain. Transmembrane regions (beta stranded) follow at residues 248-255 (TIVSIGFA), 258-265 (GIAEFGFN), 375-382 (TQAGLKIG), and 388-395 (VYVSAGIE). Intrachain disulfides connect C374–C399, C499–C547, C501–C517, C504–C519, and C521–C530. Residues 501–531 (CAPCHNNGVAVLRGTRCDCVCPTGYTGRGCE) form the EGF-like domain. A TSP type-1 2 domain is found at 542-588 (DGSWSCWGAWSSCSGRKMSRSRQCNNPVPSDGGLACRGLQQESTDCF). W548 and W551 each carry a C-linked (Man) tryptophan glycan. C554 and C587 are oxidised to a cystine.

This sequence belongs to the complement C6/C7/C8/C9 family. In terms of assembly, heterotrimer of 3 chains: alpha (C8A), beta (C8B) and gamma (C8G); the alpha and gamma chains are disulfide bonded. Component of the membrane attack complex (MAC), composed of complement C5b, C6, C7, C8A, C8B, C8G and multiple copies of the pore-forming subunit C9.

It is found in the secreted. The protein resides in the target cell membrane. Its function is as follows. Component of the membrane attack complex (MAC), a multiprotein complex activated by the complement cascade, which inserts into a target cell membrane and forms a pore, leading to target cell membrane rupture and cell lysis. The MAC is initiated by proteolytic cleavage of C5 into complement C5b in response to the classical, alternative, lectin and GZMK complement pathways. The complement pathways consist in a cascade of proteins that leads to phagocytosis and breakdown of pathogens and signaling that strengthens the adaptive immune system. C8B, together with C8A and C8G, inserts into the target membrane, but does not form pores by itself. During MAC assembly, associates with C5b, C6 and C7 to form the C5b8 intermediate complex that inserts into the target membrane and traverses the bilayer increasing membrane rigidity. This Paralichthys olivaceus (Bastard halibut) protein is Complement component C8 beta chain (c8b).